Consider the following 220-residue polypeptide: Ribosomal RNA large subunit methyltransferase E (220 aa).

S-adenosyl-L-methionine contacts are provided by G60, W62, D92, D108, and D133. K173 acts as the Proton acceptor in catalysis.

The protein belongs to the class I-like SAM-binding methyltransferase superfamily. RNA methyltransferase RlmE family.

Its subcellular location is the cytoplasm. It carries out the reaction uridine(2552) in 23S rRNA + S-adenosyl-L-methionine = 2'-O-methyluridine(2552) in 23S rRNA + S-adenosyl-L-homocysteine + H(+). In terms of biological role, specifically methylates the uridine in position 2552 of 23S rRNA at the 2'-O position of the ribose in the fully assembled 50S ribosomal subunit. This is Ribosomal RNA large subunit methyltransferase E from Paraburkholderia xenovorans (strain LB400).